Reading from the N-terminus, the 419-residue chain is AT-hook motif nuclear-localized protein 4 (419 aa).

Disordered regions lie at residues 1–168 (MEER…SGGG), 301–337 (QQQQQQIKKQRRERLGIPTTTQASNISFGGSAEDPKA), and 382–419 (DLFSSLPGEDREEDEDDLEGEDDEEFGGHSESDTEVPS). Positions 78–86 (KKKRGRPRK) match the Bipartite nuclear localization signal motif. The a.T hook DNA-binding region spans 78–90 (KKKRGRPRKYNPD). Residues 101–112 (PISSSVPLTSEF) show a composition bias toward polar residues. Residues 115 to 130 (RKRGRGRGRGRGRGRG) show a composition bias toward basic residues. The span at 136-148 (GSREPNNNNNDNN) shows a compositional bias: low complexity. The PPC domain occupies 174-314 (VSPSFTPHVL…QQIKKQRRER (141 aa)). Residues 318–328 (PTTTQASNISF) show a composition bias toward polar residues. The segment covering 391-406 (DREEDEDDLEGEDDEE) has biased composition (acidic residues).

Homodimer. Interacts with AHL3. As to expression, predominantly expressed in the stele of the root meristem with a specificity to the procambium.

Its subcellular location is the nucleus. Its function is as follows. Transcription factor that specifically binds AT-rich DNA sequences related to the nuclear matrix attachment regions (MARs). Acts redundantly with AHL3 to regulate the formation of tissue boundary between the xylem and procambium in the root meristem. Cell-to-cell movement of AHL4 from the procambium to the xylem is critical for its function in root vascular patterning. This Arabidopsis thaliana (Mouse-ear cress) protein is AT-hook motif nuclear-localized protein 4.